The following is a 1076-amino-acid chain: Bifunctional glutamine synthetase adenylyltransferase/adenylyl-removing enzyme (1076 aa).

The segment at methionine 1–methionine 521 is adenylyl removase. The interval valine 524 to arginine 1076 is adenylyl transferase. Low complexity predominate over residues threonine 1042–proline 1056. A disordered region spans residues threonine 1042 to arginine 1076.

Belongs to the GlnE family. Mg(2+) is required as a cofactor.

The catalysed reaction is [glutamine synthetase]-O(4)-(5'-adenylyl)-L-tyrosine + phosphate = [glutamine synthetase]-L-tyrosine + ADP. It catalyses the reaction [glutamine synthetase]-L-tyrosine + ATP = [glutamine synthetase]-O(4)-(5'-adenylyl)-L-tyrosine + diphosphate. Functionally, involved in the regulation of glutamine synthetase GlnA, a key enzyme in the process to assimilate ammonia. When cellular nitrogen levels are high, the C-terminal adenylyl transferase (AT) inactivates GlnA by covalent transfer of an adenylyl group from ATP to specific tyrosine residue of GlnA, thus reducing its activity. Conversely, when nitrogen levels are low, the N-terminal adenylyl removase (AR) activates GlnA by removing the adenylyl group by phosphorolysis, increasing its activity. The regulatory region of GlnE binds the signal transduction protein PII (GlnB) which indicates the nitrogen status of the cell. The chain is Bifunctional glutamine synthetase adenylyltransferase/adenylyl-removing enzyme from Bifidobacterium longum (strain DJO10A).